Consider the following 2541-residue polypeptide: Highly reducing polyketide synthase otaA (2541 aa).

In terms of domain architecture, Ketosynthase family 3 (KS3) spans 9–431 (SEPLAIIGLA…GTNAHVVLED (423 aa)). Residues Cys182, His317, and His355 each act as for beta-ketoacyl synthase activity in the active site. The 318-residue stretch at 571 to 888 (FIFTGQGANW…GSLLKRYETD (318 aa)) folds into the Malonyl-CoA:ACP transacylase (MAT) domain. Residues 957 to 1092 (HELLGVPVED…GSVRVETGPH (136 aa)) are N-terminal hotdog fold. A dehydratase (DH) domain region spans residues 957–1251 (HELLGVPVED…GLDLVQLPPS (295 aa)). Residues 957–1254 (HELLGVPVED…LVQLPPSEDA (298 aa)) form the PKS/mFAS DH domain. The C-terminal hotdog fold stretch occupies residues 1108–1254 (TESVDIAQMY…LVQLPPSEDA (147 aa)). Residues Ile1420 and Glu1442 each contribute to the S-adenosyl-L-methionine site. Residues 1433–1605 (HAQTGIKVLE…DQELRNAGLQ (173 aa)) form a methyltransferase (CMeT) domain region. The 304-residue stretch at 1838–2141 (HQPNGFHFVE…RQGNAGPWVL (304 aa)) folds into the Enoyl reductase (ER) domain. In terms of domain architecture, Ketoreductase (KR) spans 2165–2344 (ASYLLIGGFG…PATSISLGSV (180 aa)). A Carrier domain is found at 2453–2530 (DAVELVTRAI…QLAQQAAGGS (78 aa)). Ser2490 carries the post-translational modification O-(pantetheine 4'-phosphoryl)serine.

It depends on pantetheine 4'-phosphate as a cofactor.

The catalysed reaction is 4 malonyl-CoA + acetyl-CoA + 5 NADPH + 9 H(+) = 7-methylmellein + 3 CO2 + 5 NADP(+) + 5 CoA + 4 H2O. The protein operates within mycotoxin biosynthesis. Functionally, highly reducing polyketide synthase; part of the gene cluster that mediates the biosynthesis of ochratoxin A (OTA), a mycotoxin composed of a chlorinated type I polyketide dihydroisocoumarin moiety linked to L-phenylalanine, and demonstrated to have nephrotoxic, immunotoxic, genotoxic, neurotoxic, and teratogenic properties. OtaA catalyzes the condensation of one acetate and 4 malonate units to form the isocoumarin group. The pathway begins with the highly reducing polyketide synthase otaA that catalyzes the formation of the isocoumarin group during the initial stages of biosynthesis, starting from one acetate and 4 malonate units, to originate the characteristic pentaketide skeleton 7-methylmellein (7-MM) of the OTA molecule. The newly identified cyclase otaY might be involved in the polyketide cyclization reaction during the initial steps of the OTA biosynthesis. 7-MM is then oxidized into 7-carboxymellein (also called ochratoxin beta) by the cytochrome P450 monooxygenase otaC. The NRPS encoded by the otaB gene is involved in the linking of phenylalanine to the dihydroisocoumarin ring. The reaction catalyzed by NRPS results in the production of ochratoxin B (OTB), which is the non-chlorinated analog of OTA and which subsequently serves as the substrate of the halogenase otaD for chlorination activity to form the final molecular structure of OTA, containing a chlorine atom in the C-5 position of the molecule. The sequence is that of Highly reducing polyketide synthase otaA from Aspergillus carbonarius (strain ITEM 5010).